Here is a 514-residue protein sequence, read N- to C-terminus: Na(+)/H(+) antiporter NhaB (514 aa).

The next 12 membrane-spanning stretches (helical) occupy residues 23–43, 63–83, 97–117, 120–140, 144–164, 202–222, 238–258, 303–323, 357–377, 391–411, 447–467, and 475–495; these read LALIAFLIANPLIFFINPFVA, PLLPGGLLAIEAVIIGMTSAA, LLLMFMVAGIYFMKQLLLFIF, LLLSIRSKMLLSLAFCMAAAF, FLDALTVVAVVISVAVGFYGI, LMMHAGVGTALGGVMTMVGEP, FFLRMSPVTVPVLICGLFTCV, AIIGVWLVTALALHLAEVGLI, LTVFFSIVAVIIDQHLFAPII, LFYLFNGLLSSISDNVFVGTI, ATPNGQAAFLFLLTSALAPLI, and VWMALPYTLVLTLVGLLCVEF.

Belongs to the NhaB Na(+)/H(+) (TC 2.A.34) antiporter family.

It is found in the cell inner membrane. The enzyme catalyses 2 Na(+)(in) + 3 H(+)(out) = 2 Na(+)(out) + 3 H(+)(in). Na(+)/H(+) antiporter that extrudes sodium in exchange for external protons. The polypeptide is Na(+)/H(+) antiporter NhaB (Citrobacter koseri (strain ATCC BAA-895 / CDC 4225-83 / SGSC4696)).